We begin with the raw amino-acid sequence, 265 residues long: Protein N-terminal and lysine N-methyltransferase EFM7 (265 aa).

Positions 1–25 are disordered; sequence MSSDHEEDSLYGATELFGEPDGFYE. S-adenosyl-L-methionine is bound by residues tryptophan 67, 93–95, aspartate 115, tryptophan 152, and serine 176; that span reads GAA.

It belongs to the class I-like SAM-binding methyltransferase superfamily. EFM7 family.

Its subcellular location is the cytoplasm. Functionally, S-adenosyl-L-methionine-dependent protein methyltransferase that trimethylates the N-terminal glycine 'Gly-2' of elongation factor 1-alpha, before also catalyzing the mono- and dimethylation of 'Lys-3'. The sequence is that of Protein N-terminal and lysine N-methyltransferase EFM7 from Eremothecium gossypii (strain ATCC 10895 / CBS 109.51 / FGSC 9923 / NRRL Y-1056) (Yeast).